A 270-amino-acid polypeptide reads, in one-letter code: HTH-type transcriptional repressor DrrR1 (270 aa).

Low complexity predominate over residues 1-11 (MESGTSRTSDT). Residues 1–28 (MESGTSRTSDTGGTGRAGSTETSGSGDI) form a disordered region. The 61-residue stretch at 49–109 (TLTLDRVVEA…LMLDRVQRPS (61 aa)) folds into the HTH tetR-type domain. The segment at residues 72–91 (SMRRVAAELGTGTMSLYRYV) is a DNA-binding region (H-T-H motif).

The protein localises to the cytoplasm. With respect to regulation, daunorubicin and doxorubicin can induce dissociation of DrrR1 from its DNA complex. Ampicillin cannot release DrrR1 from the DNA complex at the same concentrations. In terms of biological role, transcriptional regulator that modulates the expression of the drrA2-drrB2 genes, which encode an ABC transporter involved in daunorubicin efflux, in response to intracellular daunorubicin/doxorubicin accumulation. In the absence of daunorubicin or doxorubicin, binds directly to the drrA2-drrB2 promoter region and negatively regulates expression of the genes. In the presence of daunorubicin or doxorubicin, DrrR1 dissociates from DNA, leading to the transcription of the genes. This Streptomyces coeruleorubidus protein is HTH-type transcriptional repressor DrrR1.